The sequence spans 204 residues: MALRLRSGGIVNHELLKAVEQTPRTLFAPPQYQDEVYSKRLIPLECGSFMEGCDMAVRLLHCLNLKPGQRILEVGTGSGFTAAVMGRIAERVLTIDRYQTLVASAQKNLEKAGLRNVVVRQADGSAGVPGEGTFDRILITAAFNSLPRTFSDHLVSGGTLLVPIMMSETHCRIVRVNRTGSRFDREDLFDAPYLPIVPQVASFL.

The protein belongs to the methyltransferase superfamily. L-isoaspartyl/D-aspartyl protein methyltransferase family. In terms of assembly, monomer.

Its subcellular location is the cytoplasm. It carries out the reaction [protein]-L-isoaspartate + S-adenosyl-L-methionine = [protein]-L-isoaspartate alpha-methyl ester + S-adenosyl-L-homocysteine. Its function is as follows. Catalyzes the methyl esterification of L-isoaspartyl residues in peptides and proteins that result from spontaneous decomposition of normal L-aspartyl and L-asparaginyl residues. It plays a role in the repair and/or degradation of damaged proteins. This Rhizobium meliloti (strain 1021) (Ensifer meliloti) protein is Protein-L-isoaspartate O-methyltransferase (pcm).